Consider the following 327-residue polypeptide: DNA-directed RNA polymerase subunit alpha (327 aa).

Positions 1–227 (MLIAHRPTLI…ELFGLARELN (227 aa)) are alpha N-terminal domain (alpha-NTD). An alpha C-terminal domain (alpha-CTD) region spans residues 244 to 327 (SDEDLRIPIE…GSYFDPNYGS (84 aa)).

This sequence belongs to the RNA polymerase alpha chain family. As to quaternary structure, homodimer. The RNAP catalytic core consists of 2 alpha, 1 beta, 1 beta' and 1 omega subunit. When a sigma factor is associated with the core the holoenzyme is formed, which can initiate transcription.

It carries out the reaction RNA(n) + a ribonucleoside 5'-triphosphate = RNA(n+1) + diphosphate. Functionally, DNA-dependent RNA polymerase catalyzes the transcription of DNA into RNA using the four ribonucleoside triphosphates as substrates. This chain is DNA-directed RNA polymerase subunit alpha, found in Tropheryma whipplei (strain TW08/27) (Whipple's bacillus).